The chain runs to 454 residues: tRNA modification GTPase MnmE (454 aa).

3 residues coordinate (6S)-5-formyl-5,6,7,8-tetrahydrofolate: Arg-23, Glu-80, and Lys-120. A TrmE-type G domain is found at 216–377; sequence GMKVVIAGRP…LRNHLKQSMG (162 aa). Asn-226 is a binding site for K(+). Residues 226-231, 245-251, 270-273, 335-338, and 358-360 contribute to the GTP site; these read NAGKSS, TDIAGTT, DTAG, NKAD, and SAR. Ser-230 contributes to the Mg(2+) binding site. K(+)-binding residues include Thr-245, Ile-247, and Thr-250. Thr-251 contributes to the Mg(2+) binding site. Lys-454 contacts (6S)-5-formyl-5,6,7,8-tetrahydrofolate.

It belongs to the TRAFAC class TrmE-Era-EngA-EngB-Septin-like GTPase superfamily. TrmE GTPase family. As to quaternary structure, homodimer. Heterotetramer of two MnmE and two MnmG subunits. K(+) is required as a cofactor.

The protein localises to the cytoplasm. Functionally, exhibits a very high intrinsic GTPase hydrolysis rate. Involved in the addition of a carboxymethylaminomethyl (cmnm) group at the wobble position (U34) of certain tRNAs, forming tRNA-cmnm(5)s(2)U34. The sequence is that of tRNA modification GTPase MnmE from Salmonella choleraesuis (strain SC-B67).